The following is a 156-amino-acid chain: Small ribosomal subunit protein uS7 (156 aa).

The protein belongs to the universal ribosomal protein uS7 family. As to quaternary structure, part of the 30S ribosomal subunit. Contacts proteins S9 and S11.

One of the primary rRNA binding proteins, it binds directly to 16S rRNA where it nucleates assembly of the head domain of the 30S subunit. Is located at the subunit interface close to the decoding center, probably blocks exit of the E-site tRNA. The polypeptide is Small ribosomal subunit protein uS7 (Deinococcus radiodurans (strain ATCC 13939 / DSM 20539 / JCM 16871 / CCUG 27074 / LMG 4051 / NBRC 15346 / NCIMB 9279 / VKM B-1422 / R1)).